We begin with the raw amino-acid sequence, 436 residues long: 3-ketoacyl-CoA thiolase (436 aa).

The Acyl-thioester intermediate role is filled by Cys99. Catalysis depends on proton acceptor residues His392 and Cys422.

This sequence belongs to the thiolase-like superfamily. Thiolase family. In terms of assembly, heterotetramer of two alpha chains (FadJ) and two beta chains (FadI).

The protein resides in the cytoplasm. The catalysed reaction is an acyl-CoA + acetyl-CoA = a 3-oxoacyl-CoA + CoA. It participates in lipid metabolism; fatty acid beta-oxidation. In terms of biological role, catalyzes the final step of fatty acid oxidation in which acetyl-CoA is released and the CoA ester of a fatty acid two carbons shorter is formed. The polypeptide is 3-ketoacyl-CoA thiolase (Shewanella woodyi (strain ATCC 51908 / MS32)).